Reading from the N-terminus, the 436-residue chain is Serine protease inhibitor A6 (436 aa).

Residues 1-16 (MHLLVYLSLFFALALA) form the signal peptide. The tract at residues 26 to 60 (KHRHRHEQQGHHDSAKHGHQKDKQQQEQIKNDEGK) is disordered. A compositionally biased stretch (basic and acidic residues) spans 32–60 (EQQGHHDSAKHGHQKDKQQQEQIKNDEGK). Residues asparagine 260 and asparagine 289 are each glycosylated (N-linked (GlcNAc...) asparagine).

It belongs to the serpin family. As to expression, liver.

It localises to the secreted. The protein resides in the extracellular space. In terms of biological role, not yet known. The chain is Serine protease inhibitor A6 (serpina6) from Xenopus laevis (African clawed frog).